The chain runs to 588 residues: L-fucose isomerase (588 aa).

Catalysis depends on proton acceptor residues Glu-335 and Asp-359. The Mn(2+) site is built by Glu-335, Asp-359, and His-525.

This sequence belongs to the L-fucose isomerase family. Requires Mn(2+) as cofactor.

It is found in the cytoplasm. It catalyses the reaction L-fucose = L-fuculose. It participates in carbohydrate degradation; L-fucose degradation; L-lactaldehyde and glycerone phosphate from L-fucose: step 1/3. In terms of biological role, converts the aldose L-fucose into the corresponding ketose L-fuculose. The chain is L-fucose isomerase from Streptococcus pneumoniae (strain 70585).